The primary structure comprises 254 residues: GTP cyclohydrolase 1 type 2 homolog (254 aa).

Residues His-68, His-69, Asp-106, His-222, and Glu-226 each contribute to the a divalent metal cation site.

This sequence belongs to the GTP cyclohydrolase I type 2/NIF3 family. As to quaternary structure, homohexamer.

This is GTP cyclohydrolase 1 type 2 homolog from Allochromatium vinosum (strain ATCC 17899 / DSM 180 / NBRC 103801 / NCIMB 10441 / D) (Chromatium vinosum).